Consider the following 681-residue polypeptide: DNA-directed RNA polymerase subunit beta' (681 aa).

C69, C71, C87, and C90 together coordinate Zn(2+). 3 residues coordinate Mg(2+): D489, D491, and D493.

This sequence belongs to the RNA polymerase beta' chain family. RpoC1 subfamily. As to quaternary structure, in plastids the minimal PEP RNA polymerase catalytic core is composed of four subunits: alpha, beta, beta', and beta''. When a (nuclear-encoded) sigma factor is associated with the core the holoenzyme is formed, which can initiate transcription. The cofactor is Mg(2+). Zn(2+) is required as a cofactor.

The protein resides in the plastid. It localises to the chloroplast. The catalysed reaction is RNA(n) + a ribonucleoside 5'-triphosphate = RNA(n+1) + diphosphate. Functionally, DNA-dependent RNA polymerase catalyzes the transcription of DNA into RNA using the four ribonucleoside triphosphates as substrates. This is DNA-directed RNA polymerase subunit beta' from Cycas taitungensis (Prince sago).